A 407-amino-acid chain; its full sequence is Argininosuccinate synthase (407 aa).

ATP is bound by residues 11–19 (AYSGGLDTS) and Ala38. Residues Tyr89 and Ser94 each coordinate L-citrulline. Position 119 (Gly119) interacts with ATP. L-aspartate is bound by residues Thr121, Asn125, and Asp126. L-citrulline is bound at residue Asn125. Residues Arg129, Ser180, Ser189, Glu265, and Tyr277 each coordinate L-citrulline.

Belongs to the argininosuccinate synthase family. Type 1 subfamily. As to quaternary structure, homotetramer.

It localises to the cytoplasm. It catalyses the reaction L-citrulline + L-aspartate + ATP = 2-(N(omega)-L-arginino)succinate + AMP + diphosphate + H(+). Its pathway is amino-acid biosynthesis; L-arginine biosynthesis; L-arginine from L-ornithine and carbamoyl phosphate: step 2/3. The polypeptide is Argininosuccinate synthase (Magnetococcus marinus (strain ATCC BAA-1437 / JCM 17883 / MC-1)).